The following is a 110-amino-acid chain: Large ribosomal subunit protein uL22 (110 aa).

This sequence belongs to the universal ribosomal protein uL22 family. As to quaternary structure, part of the 50S ribosomal subunit.

In terms of biological role, this protein binds specifically to 23S rRNA; its binding is stimulated by other ribosomal proteins, e.g. L4, L17, and L20. It is important during the early stages of 50S assembly. It makes multiple contacts with different domains of the 23S rRNA in the assembled 50S subunit and ribosome. Functionally, the globular domain of the protein is located near the polypeptide exit tunnel on the outside of the subunit, while an extended beta-hairpin is found that lines the wall of the exit tunnel in the center of the 70S ribosome. This is Large ribosomal subunit protein uL22 from Photorhabdus laumondii subsp. laumondii (strain DSM 15139 / CIP 105565 / TT01) (Photorhabdus luminescens subsp. laumondii).